The chain runs to 121 residues: Prefoldin subunit beta (121 aa).

Belongs to the prefoldin subunit beta family. In terms of assembly, heterohexamer of two alpha and four beta subunits.

Its subcellular location is the cytoplasm. In terms of biological role, molecular chaperone capable of stabilizing a range of proteins. Seems to fulfill an ATP-independent, HSP70-like function in archaeal de novo protein folding. This chain is Prefoldin subunit beta (pfdB), found in Methanothermobacter thermautotrophicus (strain ATCC 29096 / DSM 1053 / JCM 10044 / NBRC 100330 / Delta H) (Methanobacterium thermoautotrophicum).